The following is a 448-amino-acid chain: Chromosomal replication initiator protein DnaA (448 aa).

The interval 1 to 72 (MPDLQELWNY…VEGAYEFAEI (72 aa)) is domain I, interacts with DnaA modulators. The tract at residues 72–110 (IELTPIFVLPGESDNLTPLEPEEEHVLTKAETPTFLRET) is domain II. The interval 111 to 327 (HLNSKYTFDT…GALVRVQAYA (217 aa)) is domain III, AAA+ region. Gly155, Gly157, Lys158, and Thr159 together coordinate ATP. Residues 328 to 448 (TMQNAEITTS…ILDLKNTMKS (121 aa)) form a domain IV, binds dsDNA region.

This sequence belongs to the DnaA family. As to quaternary structure, oligomerizes as a right-handed, spiral filament on DNA at oriC.

Its subcellular location is the cytoplasm. Its function is as follows. Plays an essential role in the initiation and regulation of chromosomal replication. ATP-DnaA binds to the origin of replication (oriC) to initiate formation of the DNA replication initiation complex once per cell cycle. Binds the DnaA box (a 9 base pair repeat at the origin) and separates the double-stranded (ds)DNA. Forms a right-handed helical filament on oriC DNA; dsDNA binds to the exterior of the filament while single-stranded (ss)DNA is stabiized in the filament's interior. The ATP-DnaA-oriC complex binds and stabilizes one strand of the AT-rich DNA unwinding element (DUE), permitting loading of DNA polymerase. After initiation quickly degrades to an ADP-DnaA complex that is not apt for DNA replication. Binds acidic phospholipids. This is Chromosomal replication initiator protein DnaA from Latilactobacillus sakei subsp. sakei (strain 23K) (Lactobacillus sakei subsp. sakei).